We begin with the raw amino-acid sequence, 387 residues long: Protein ERD1 homolog 2 (387 aa).

A run of 8 helical transmembrane segments spans residues 20–40 (IGLL…LIYI), 92–112 (AGYC…ILFL), 126–146 (PIYP…PFPW), 177–197 (FIVS…YIFG), 217–237 (GTFF…LQCL), 252–272 (LLSA…AIIH), 285–305 (GYLF…TFLW), and 326–346 (FPMF…VTWS). Residues 212–387 (DLKCDGTFFV…LFFHLDAISS (176 aa)) form the EXS domain.

It belongs to the ERD1 family.

Its subcellular location is the membrane. The sequence is that of Protein ERD1 homolog 2 from Schizosaccharomyces pombe (strain 972 / ATCC 24843) (Fission yeast).